Here is a 441-residue protein sequence, read N- to C-terminus: Glutamyl-tRNA reductase (441 aa).

Residues 58–61 (TCNR), Ser116, 121–123 (EPD), and Gln127 each bind substrate. The Nucleophile role is filled by Cys59. 195 to 200 (GAGMAG) is a binding site for NADP(+).

This sequence belongs to the glutamyl-tRNA reductase family. In terms of assembly, homodimer.

It carries out the reaction (S)-4-amino-5-oxopentanoate + tRNA(Glu) + NADP(+) = L-glutamyl-tRNA(Glu) + NADPH + H(+). It functions in the pathway porphyrin-containing compound metabolism; protoporphyrin-IX biosynthesis; 5-aminolevulinate from L-glutamyl-tRNA(Glu): step 1/2. Catalyzes the NADPH-dependent reduction of glutamyl-tRNA(Glu) to glutamate 1-semialdehyde (GSA). In Ignicoccus hospitalis (strain KIN4/I / DSM 18386 / JCM 14125), this protein is Glutamyl-tRNA reductase.